Here is a 613-residue protein sequence, read N- to C-terminus: Probable inactive purple acid phosphatase 1 (613 aa).

Positions 1–24 (MRESLVAILVTVISVLGAIHQVKS) are cleaved as a signal peptide. 2 N-linked (GlcNAc...) asparagine glycosylation sites follow: asparagine 89 and asparagine 116. Aspartate 295 provides a ligand contact to Fe cation. A glycan (N-linked (GlcNAc...) asparagine) is linked at asparagine 316. Fe cation-binding residues include aspartate 336 and tyrosine 339. Position 336 (aspartate 336) interacts with Zn(2+). The Zn(2+) site is built by asparagine 369, histidine 458, and histidine 500. Substrate is bound at residue asparagine 369. 500–502 (HAH) contacts substrate. Residue histidine 502 coordinates Fe cation. Residues asparagine 528 and asparagine 551 are each glycosylated (N-linked (GlcNAc...) asparagine).

It belongs to the metallophosphoesterase superfamily. Purple acid phosphatase family. Homodimer. It depends on Fe cation as a cofactor. Zn(2+) is required as a cofactor. As to expression, expressed in roots, stems, leaves, flowers and siliques.

Its subcellular location is the secreted. The chain is Probable inactive purple acid phosphatase 1 (PAP1) from Arabidopsis thaliana (Mouse-ear cress).